A 132-amino-acid chain; its full sequence is Fatty acid-binding protein 9 (132 aa).

Phosphoserine is present on residues serine 13, serine 14, serine 44, and serine 91.

Belongs to the calycin superfamily. Fatty-acid binding protein (FABP) family.

The protein resides in the cytoplasm. The polypeptide is Fatty acid-binding protein 9 (FABP9) (Homo sapiens (Human)).